We begin with the raw amino-acid sequence, 400 residues long: Acetate kinase (400 aa).

A Mg(2+)-binding site is contributed by asparagine 7. ATP is bound at residue lysine 14. Arginine 92 serves as a coordination point for substrate. The active-site Proton donor/acceptor is the aspartate 149. Residues 209-213 (HLGNG), 283-285 (DAR), and 331-335 (GMGEN) contribute to the ATP site. Mg(2+) is bound at residue glutamate 385.

Belongs to the acetokinase family. In terms of assembly, homodimer. It depends on Mg(2+) as a cofactor. The cofactor is Mn(2+).

It localises to the cytoplasm. It carries out the reaction acetate + ATP = acetyl phosphate + ADP. Its pathway is metabolic intermediate biosynthesis; acetyl-CoA biosynthesis; acetyl-CoA from acetate: step 1/2. In terms of biological role, catalyzes the formation of acetyl phosphate from acetate and ATP. Can also catalyze the reverse reaction. The chain is Acetate kinase from Helicobacter acinonychis (strain Sheeba).